We begin with the raw amino-acid sequence, 283 residues long: Pantothenate synthetase (283 aa).

30-37 (MGYYHAGH) provides a ligand contact to ATP. Catalysis depends on His-37, which acts as the Proton donor. Residue Gln-61 participates in (R)-pantoate binding. Gln-61 serves as a coordination point for beta-alanine. 147–150 (GQKD) contributes to the ATP binding site. Gln-153 provides a ligand contact to (R)-pantoate. Residues Val-176 and 184–187 (MSSR) each bind ATP.

Belongs to the pantothenate synthetase family. Homodimer.

It localises to the cytoplasm. It carries out the reaction (R)-pantoate + beta-alanine + ATP = (R)-pantothenate + AMP + diphosphate + H(+). It functions in the pathway cofactor biosynthesis; (R)-pantothenate biosynthesis; (R)-pantothenate from (R)-pantoate and beta-alanine: step 1/1. Its function is as follows. Catalyzes the condensation of pantoate with beta-alanine in an ATP-dependent reaction via a pantoyl-adenylate intermediate. This chain is Pantothenate synthetase, found in Nitratidesulfovibrio vulgaris (strain ATCC 29579 / DSM 644 / CCUG 34227 / NCIMB 8303 / VKM B-1760 / Hildenborough) (Desulfovibrio vulgaris).